A 362-amino-acid polypeptide reads, in one-letter code: MTQITPQPGIMDIALYQGGAAHVDGVSNVTKLSSNENPLGPSPAAVEAMAEAAATMHRYPSSDHATLRAAIAETHGLDAERIICGAGSDEIIAFLCQCYAGPGDEVLYTEHGFAMYRISALAAGATPVEVKERERVTDVDALLAGCTAQTKLVFIANPNNPTGTMISEAEVARLADGIPEDAILVLDGAYAEYVEGFDAGAQLIAARHNVVMTRTFSKIYGLGGARVGWAYGPQEIIDVLNRVRGPFNVSTTALAGAEAAVRDTDYVQRCRLENAKWRGWLADQLAELGVPSDTSCTNFILARFASQSEAESCDDFLKQRGLIVRRVAGYNLPTALRITIGDETACRAVAAAVKDFKAGAAE.

Position 218 is an N6-(pyridoxal phosphate)lysine (Lys-218).

The protein belongs to the class-II pyridoxal-phosphate-dependent aminotransferase family. Histidinol-phosphate aminotransferase subfamily. In terms of assembly, homodimer. Requires pyridoxal 5'-phosphate as cofactor.

The enzyme catalyses L-histidinol phosphate + 2-oxoglutarate = 3-(imidazol-4-yl)-2-oxopropyl phosphate + L-glutamate. Its pathway is amino-acid biosynthesis; L-histidine biosynthesis; L-histidine from 5-phospho-alpha-D-ribose 1-diphosphate: step 7/9. This chain is Histidinol-phosphate aminotransferase, found in Ruegeria sp. (strain TM1040) (Silicibacter sp.).